Reading from the N-terminus, the 222-residue chain is Phosphoribosylformylglycinamidine synthase subunit PurQ (222 aa).

The Glutamine amidotransferase type-1 domain maps to 2–222 (SVAIVRFPGT…DNLLHIAEMK (221 aa)). The Nucleophile role is filled by Cys-86. Catalysis depends on residues His-194 and Glu-196.

As to quaternary structure, part of the FGAM synthase complex composed of 1 PurL, 1 PurQ and 2 PurS subunits.

Its subcellular location is the cytoplasm. The enzyme catalyses N(2)-formyl-N(1)-(5-phospho-beta-D-ribosyl)glycinamide + L-glutamine + ATP + H2O = 2-formamido-N(1)-(5-O-phospho-beta-D-ribosyl)acetamidine + L-glutamate + ADP + phosphate + H(+). It carries out the reaction L-glutamine + H2O = L-glutamate + NH4(+). It participates in purine metabolism; IMP biosynthesis via de novo pathway; 5-amino-1-(5-phospho-D-ribosyl)imidazole from N(2)-formyl-N(1)-(5-phospho-D-ribosyl)glycinamide: step 1/2. Its function is as follows. Part of the phosphoribosylformylglycinamidine synthase complex involved in the purines biosynthetic pathway. Catalyzes the ATP-dependent conversion of formylglycinamide ribonucleotide (FGAR) and glutamine to yield formylglycinamidine ribonucleotide (FGAM) and glutamate. The FGAM synthase complex is composed of three subunits. PurQ produces an ammonia molecule by converting glutamine to glutamate. PurL transfers the ammonia molecule to FGAR to form FGAM in an ATP-dependent manner. PurS interacts with PurQ and PurL and is thought to assist in the transfer of the ammonia molecule from PurQ to PurL. The sequence is that of Phosphoribosylformylglycinamidine synthase subunit PurQ from Helicobacter hepaticus (strain ATCC 51449 / 3B1).